A 228-amino-acid chain; its full sequence is PKHD-type hydroxylase xcc-b100_1388 (228 aa).

The region spanning 78 to 180 (RIYPPLFNRY…RVASFFWIQS (103 aa)) is the Fe2OG dioxygenase domain. Positions 96, 98, and 161 each coordinate Fe cation. Residue R171 participates in 2-oxoglutarate binding.

Requires Fe(2+) as cofactor. It depends on L-ascorbate as a cofactor.

The sequence is that of PKHD-type hydroxylase xcc-b100_1388 from Xanthomonas campestris pv. campestris (strain B100).